We begin with the raw amino-acid sequence, 860 residues long: Receptor-like protein 31 (860 aa).

Residues 1-23 form the signal peptide; it reads MMIPSQSCFCFFFMVSFFLHTLA. Residues 24-809 are Extracellular-facing; it reads SPTLRHCRHD…SEPEEHVINW (786 aa). Residues Asn49, Asn64, Asn88, Asn95, Asn112, Asn117, Asn154, Asn178, Asn202, and Asn213 are each glycosylated (N-linked (GlcNAc...) asparagine). 6 LRR repeats span residues 108–131, 132–155, 156–179, 181–202, 203–226, and 227–251; these read QHLH…LGNL, FRLT…IGNL, SRLT…IGNL, QLEY…TFSN, LTKL…DMSG, and FQNL…LFTI. Residues 252–276 form an LRR 7; degenerate repeat; that stretch reads PSLRWANLEGNMFKGPIEFRNMYSP. LRR repeat units lie at residues 277–301, 302–325, 326–349, 350–374, 376–398, 400–419, 420–444, 446–468, 469–494, 496–517, 518–541, 543–564, 565–591, and 592–615; these read STRL…LSQY, LNLI…LFTI, PTLE…NMSS, SSSL…VSQY, NLEE…ISKL, KLEY…PSWL, WRLT…GLDE, QVQW…ICKL, RSLE…SFMV, LTDL…FVNA, TKLL…LIHC, AMQL…WLGS, LPSL…SIGF, and QSLR…YFSS. Residues Asn313, Asn346, and Asn364 are each glycosylated (N-linked (GlcNAc...) asparagine). Asn429 is a glycosylation site (N-linked (GlcNAc...) asparagine). Asn482, Asn503, and Asn516 each carry an N-linked (GlcNAc...) asparagine glycan. N-linked (GlcNAc...) asparagine glycosylation is found at Asn642, Asn673, and Asn697. 4 LRR repeats span residues 665–690, 691–714, 716–738, and 740–763; these read INEE…IGLL, KELR…LANL, KLEA…LGSL, and FMST…QFQG. 2 N-linked (GlcNAc...) asparagine glycosylation sites follow: Asn745 and Asn765. A helical transmembrane segment spans residues 810–830; it reads IAAGIAYGPGVVCGLVIGHIF. At 831–860 the chain is on the cytoplasmic side; it reads LSHKHECWFMEKFRRKKPKVVTRIARPSKH.

It belongs to the RLP family.

It localises to the cell membrane. The polypeptide is Receptor-like protein 31 (Arabidopsis thaliana (Mouse-ear cress)).